The sequence spans 143 residues: Large ribosomal subunit protein uL15 (143 aa).

The segment at 1-59 is disordered; the sequence is MELNTITPGQGAKHAKRRVGRGIGSGLGKTAGRGHKGQKSRSGGYHKVGFEGGQMPMQR. The segment covering 21 to 31 has biased composition (gly residues); the sequence is RGIGSGLGKTA.

Belongs to the universal ribosomal protein uL15 family. As to quaternary structure, part of the 50S ribosomal subunit.

Its function is as follows. Binds to the 23S rRNA. In Polaromonas naphthalenivorans (strain CJ2), this protein is Large ribosomal subunit protein uL15.